The following is a 474-amino-acid chain: Dipeptidase A (474 aa).

C6 is an active-site residue.

The protein belongs to the peptidase C69 family. In terms of assembly, homooctamer.

The enzyme catalyses an L-aminoacyl-L-amino acid + H2O = 2 an L-alpha-amino acid. Its activity is regulated as follows. Inhibited by Zn(2+), Cu(2+), Ca(2+) and Cd(2+). Hydrolyzes a wide range of dipeptides but unable to hydrolyze dipeptides containing proline. Highest activity against Met-Ala. In Lactobacillus helveticus (Lactobacillus suntoryeus), this protein is Dipeptidase A (pepDA).